The chain runs to 166 residues: Ribonuclease H2 subunit C (166 aa).

The residue at position 1 (M1) is an N-acetylmethionine.

It belongs to the RNase H2 subunit C family. As to quaternary structure, the RNase H2 complex is a heterotrimer composed of the catalytic subunit RNASEH2A and the non-catalytic subunits RNASEH2B and RNASEH2C.

Its subcellular location is the nucleus. Non catalytic subunit of RNase H2, an endonuclease that specifically degrades the RNA of RNA:DNA hybrids. Participates in DNA replication, possibly by mediating the removal of lagging-strand Okazaki fragment RNA primers during DNA replication. Mediates the excision of single ribonucleotides from DNA:RNA duplexes. The chain is Ribonuclease H2 subunit C (Rnaseh2c) from Mus musculus (Mouse).